We begin with the raw amino-acid sequence, 805 residues long: Replication restart protein PriA (805 aa).

Positions 1-110 (MNFAEVIVDV…QAMLPAALKA (110 aa)) are 3'BD. The segment at 111 to 166 (KYEKELKIAHGADLPPQVERLFSETKTLLYSDIPDHETLKLIQRHVQKGDIDVTYK) is linker. The segment at 167–253 (VAQKTNKKMV…KESYEEVYRD (87 aa)) is WH. The Helicase ATP-binding domain maps to 282–448 (TLDSDEHKVF…QKGVYELLSL (167 aa)). 295 to 302 (GVTGSGKT) provides a ligand contact to ATP. Positions 391–394 (DEEH) match the DEAH box motif. The Zn(2+) site is built by Cys-510, Cys-513, Cys-519, Cys-522, Cys-537, Cys-540, Cys-550, and Cys-553. The Helicase C-terminal domain maps to 545–699 (PVPHTCPECA…TFYQHEMAHR (155 aa)).

It belongs to the helicase family. PriA subfamily. In terms of assembly, monomer. Component of the replication restart primosome which assembles in this order; PriA, DnaD then DnaB. The preferred DNA substrate mimics an arrested DNA replication fork with unreplicated lagging strand. Interacts with DnaD but not DnaB. Interacts with SSB (sbbA) via the latter's 35 residue C-terminal tail which tethers PriA to ssDNA. Colocalizes with DNA pol III subunit gamma/tau (dnaX). May interact with RarA. Zn(2+) is required as a cofactor.

Its subcellular location is the cytoplasm. It is found in the nucleoid. The enzyme catalyses Couples ATP hydrolysis with the unwinding of duplex DNA by translocating in the 3'-5' direction.. It carries out the reaction ATP + H2O = ADP + phosphate + H(+). Initiates the restart of stalled replication forks, which reloads the replicative helicase on sites other than the origin of replication. Recognizes and binds to abandoned replication forks and remodels them to uncover a helicase loading site. Promotes assembly of the primosome at these replication forks. Serves as the initiating protein for assembly of the replication restart primosome; binding of PriA to an arrested DNA replication fork with unreplicated lagging strand triggers assembly. Sequentially DnaD (possibly as a dimer) and DnaB homotetramers bind. Assembly probably continues by loading of the DnaC replicative helicase aided by helicase loader DnaI. A single-strand (ss)DNA-dependent ATPase with helicase activity. Recognizes and binds the arrested nascent DNA chain at stalled replication forks. Binds forked DNA substrates and makes a larger complex with RarA; RarA has no effect on the helicase function. Binds ssDNA, D-loops and replication fork-like substrates but not double-stranded (ds)DNA; the preferred DNA substrate mimics an arrested DNA replication fork with an unreplicated lagging strand. Recognizes nicked dsDNA. A supershift on ssDNA occurs in the presence of single-stranded binding protein (SSB). Cannot substitute for E.coli PriA. In terms of biological role, required for replication of plasmids that have a rolling circle mechanism, which produces circular single-stranded (ss)DNA intermediates corresponding to the lagging strand template, which are then converted into double-stranded (ds)DNA; priA is required to activate the conversion of ssDNA into dsDNA. This is Replication restart protein PriA from Bacillus subtilis (strain 168).